Consider the following 217-residue polypeptide: Flagellin B2 (217 aa).

Positions 1–12 (MKVFEFLKGKRG) are excised as a propeptide.

The protein belongs to the archaeal flagellin family.

It localises to the archaeal flagellum. In terms of biological role, flagellin is the subunit protein which polymerizes to form the filaments of archaeal flagella. In Methanocaldococcus jannaschii (strain ATCC 43067 / DSM 2661 / JAL-1 / JCM 10045 / NBRC 100440) (Methanococcus jannaschii), this protein is Flagellin B2 (flaB2).